We begin with the raw amino-acid sequence, 199 residues long: NAD(P)H dehydrogenase (quinone) (199 aa).

The 187-residue stretch at 4–190 (VLVLYYSAYG…AGARYQGRQI (187 aa)) folds into the Flavodoxin-like domain. FMN is bound by residues 10–15 (SAYGHI) and 78–80 (TRF). Tyrosine 12 is an NAD(+) binding site. Residue tryptophan 98 coordinates substrate. FMN-binding positions include 113–119 (SSATQHG) and histidine 134.

Belongs to the WrbA family. It depends on FMN as a cofactor.

It catalyses the reaction a quinone + NADH + H(+) = a quinol + NAD(+). It carries out the reaction a quinone + NADPH + H(+) = a quinol + NADP(+). The chain is NAD(P)H dehydrogenase (quinone) from Bradyrhizobium diazoefficiens (strain JCM 10833 / BCRC 13528 / IAM 13628 / NBRC 14792 / USDA 110).